Consider the following 192-residue polypeptide: Probable nicotinate-nucleotide adenylyltransferase (192 aa).

This sequence belongs to the NadD family.

It carries out the reaction nicotinate beta-D-ribonucleotide + ATP + H(+) = deamido-NAD(+) + diphosphate. It participates in cofactor biosynthesis; NAD(+) biosynthesis; deamido-NAD(+) from nicotinate D-ribonucleotide: step 1/1. Its function is as follows. Catalyzes the reversible adenylation of nicotinate mononucleotide (NaMN) to nicotinic acid adenine dinucleotide (NaAD). In Bradyrhizobium sp. (strain ORS 278), this protein is Probable nicotinate-nucleotide adenylyltransferase.